Here is a 68-residue protein sequence, read N- to C-terminus: Metallothionein (68 aa).

Belongs to the metallothionein superfamily. Type 4 family.

Functionally, metallothioneins have a high content of cysteine residues that bind various heavy metals. This Lytechinus pictus (Painted sea urchin) protein is Metallothionein (MT1).